The sequence spans 364 residues: D-alanine--D-alanine ligase (364 aa).

An ATP-grasp domain is found at 134–344 (KVLLKSFNIP…YESLVDKLIT (211 aa)). Residue 167 to 222 (NNKLNYPVIVKPSVLGSSIGINVAYNVSQIEKYIEEAFEYDLTVVVEKFIKAREIE) participates in ATP binding. Mg(2+) contacts are provided by Asp297, Glu311, and Asn313.

The protein belongs to the D-alanine--D-alanine ligase family. It depends on Mg(2+) as a cofactor. Mn(2+) serves as cofactor.

The protein resides in the cytoplasm. The enzyme catalyses 2 D-alanine + ATP = D-alanyl-D-alanine + ADP + phosphate + H(+). It functions in the pathway cell wall biogenesis; peptidoglycan biosynthesis. Cell wall formation. The protein is D-alanine--D-alanine ligase of Borrelia recurrentis (strain A1).